Consider the following 493-residue polypeptide: Cyclin-dependent kinase-like 2 (493 aa).

One can recognise a Protein kinase domain in the interval 4–287 (YENLGLVGEG…CAELLHHDFF (284 aa)). Residues 10–18 (VGEGSYGMV) and lysine 33 contribute to the ATP site. The short motif at 45 to 51 (KKIAMRE) is the [NKR]KIAxRE element. Aspartate 126 (proton acceptor) is an active-site residue. 2 disordered regions span residues 311–338 (VSLS…KTLV) and 363–384 (GEKA…SRTS). A compositionally biased stretch (basic and acidic residues) spans 320–336 (RKKEKEKDDSLGEERKT).

The protein belongs to the protein kinase superfamily. CMGC Ser/Thr protein kinase family. CDC2/CDKX subfamily.

The protein localises to the cytoplasm. The protein resides in the nucleus. It catalyses the reaction L-seryl-[protein] + ATP = O-phospho-L-seryl-[protein] + ADP + H(+). It carries out the reaction L-threonyl-[protein] + ATP = O-phospho-L-threonyl-[protein] + ADP + H(+). This Pongo abelii (Sumatran orangutan) protein is Cyclin-dependent kinase-like 2.